Consider the following 148-residue polypeptide: MIGGVSILSLDSKGRLAIPAKHRETLLSAFGHKLVVTLESQDHLLLYPEPNWRPVEARLLALPTGNPTLKRYQRLVLGHAETLEMDSAGRVLLPARLRELTALDKDVALVGMGNRFELWNAEEWDSQTADALAIDQADLAQHLGDFTL.

SpoVT-AbrB domains follow at residues 5-51 (VSIL…PEPN) and 80-123 (AETL…NAEE).

The protein belongs to the MraZ family. Forms oligomers.

The protein resides in the cytoplasm. Its subcellular location is the nucleoid. The protein is Transcriptional regulator MraZ of Chromobacterium violaceum (strain ATCC 12472 / DSM 30191 / JCM 1249 / CCUG 213 / NBRC 12614 / NCIMB 9131 / NCTC 9757 / MK).